The sequence spans 220 residues: Zip homologous protein 1 (220 aa).

The RING-type zinc-finger motif lies at 6–44 (CNGCGCSPSKRQFFITACSHVFCETCRTTPTADFCHLCK). A coiled-coil region spans residues 124-155 (LTSFEENNRKKLEDIERENEKLRNLISALELK). Disordered stretches follow at residues 166 to 186 (EFFM…SDVD) and 201 to 220 (RSDS…GSLF). Polar residues predominate over residues 171-180 (GTPTSSNPSV).

As to quaternary structure, interacts with zhp-2; the interaction is required for their chromosome association and stability. In terms of tissue distribution, expressed in the germline.

The protein resides in the chromosome. Functionally, recruited co-dependently with zhp-2 to the synaptonemal complex between homologous chromosome pairs to regulate the formation and number of crossover events between homologs during meiotic recombination. Together with zhp-2, promotes the accumulation of pro-crossover proteins, including zhp-3 and zhp-4, at a designated crossover site along the recombination intermediate. Limits the number of crossover sites along a recombination intermediate by restricting the association of these pro-crossover proteins with other recombination sites during late prophase. Also, together with zhp-2, plays a role in chromosome remodeling following crossover formation to promote two successive rounds of chromosome segregation during meiosis. The protein is Zip homologous protein 1 of Caenorhabditis elegans.